Consider the following 277-residue polypeptide: MDTNRPGAFVLSSAPLAALHNMAEMKTSLFPYALQGPAGFKAPALGGLGAQLPLGTPHGISDILGRPVGAAGGGLLGGLPRLNGLASSAGVYFGPAAAVARGYPKPLAELPGRPPIFWPGVVQGAPWRDPRLAGPAPAGGVLDKDGKKKHSRPTFSGQQIFALEKTFEQTKYLAGPERARLAYSLGMTESQVKVWFQNRRTKWRKRHAVEMASAKKKQDSDAEKLKVGGSDAEDDDEYNRPLDPNSDDEKITRLLKKHKPSNLALVSPCGGGAGDAL.

Positions 89-142 are repressor domain; the sequence is AGVYFGPAAAVARGYPKPLAELPGRPPIFWPGVVQGAPWRDPRLAGPAPAGGVL. 2 disordered regions span residues 132-155 and 210-250; these read LAGP…RPTF and EMAS…DDEK. Residues 148-207 constitute a DNA-binding region (homeobox); that stretch reads KKHSRPTFSGQQIFALEKTFEQTKYLAGPERARLAYSLGMTESQVKVWFQNRRTKWRKRH. Residues 216-226 show a composition bias toward basic and acidic residues; it reads KKQDSDAEKLK.

Highest expression in brain.

It localises to the nucleus. Functionally, transcription factor with repressor activity involved in the regulation of axon-glial interactions at myelin paranodes in oligodendrocytes. Binds to the consensus DNA sequence 5'-(A/T)TTAATGA-3'. In oligodendrocytes, binds to MBP and PLP1 promoter regions. This is Homeobox protein Nkx-6.2 (NKX6-2) from Homo sapiens (Human).